The primary structure comprises 230 residues: 7-cyano-7-deazaguanine synthase (230 aa).

9–19 contributes to the ATP binding site; that stretch reads YSGGLDSTTCL. The Zn(2+) site is built by Cys190, Cys200, Cys203, and Cys206.

The protein belongs to the QueC family. The cofactor is Zn(2+).

The enzyme catalyses 7-carboxy-7-deazaguanine + NH4(+) + ATP = 7-cyano-7-deazaguanine + ADP + phosphate + H2O + H(+). Its pathway is purine metabolism; 7-cyano-7-deazaguanine biosynthesis. Its function is as follows. Catalyzes the ATP-dependent conversion of 7-carboxy-7-deazaguanine (CDG) to 7-cyano-7-deazaguanine (preQ(0)). The polypeptide is 7-cyano-7-deazaguanine synthase (Syntrophotalea carbinolica (strain DSM 2380 / NBRC 103641 / GraBd1) (Pelobacter carbinolicus)).